We begin with the raw amino-acid sequence, 290 residues long: Glutamate racemase (290 aa).

Residues 32–33 (DS) and 64–65 (YG) contribute to the substrate site. Cysteine 96 serves as the catalytic Proton donor/acceptor. A substrate-binding site is contributed by 97 to 98 (NT). Cysteine 208 (proton donor/acceptor) is an active-site residue. 209-210 (TH) serves as a coordination point for substrate.

This sequence belongs to the aspartate/glutamate racemases family.

It carries out the reaction L-glutamate = D-glutamate. It participates in cell wall biogenesis; peptidoglycan biosynthesis. Its function is as follows. Provides the (R)-glutamate required for cell wall biosynthesis. This Sodalis glossinidius (strain morsitans) protein is Glutamate racemase.